We begin with the raw amino-acid sequence, 563 residues long: Arginine--tRNA ligase (563 aa).

A 'HIGH' region motif is present at residues 121 to 131 (PNIAKPFSIGH).

Belongs to the class-I aminoacyl-tRNA synthetase family. As to quaternary structure, monomer.

It localises to the cytoplasm. It carries out the reaction tRNA(Arg) + L-arginine + ATP = L-arginyl-tRNA(Arg) + AMP + diphosphate. This chain is Arginine--tRNA ligase (argS), found in Streptococcus pneumoniae serotype 4 (strain ATCC BAA-334 / TIGR4).